A 352-amino-acid chain; its full sequence is DNA polymerase IV (352 aa).

One can recognise a UmuC domain in the interval 4–185 (IIHVDMDCFF…LPLSKIPGVG (182 aa)). Mg(2+) contacts are provided by Asp8 and Asp103. Glu104 is a catalytic residue.

The protein belongs to the DNA polymerase type-Y family. Monomer. Mg(2+) is required as a cofactor.

It localises to the cytoplasm. It carries out the reaction DNA(n) + a 2'-deoxyribonucleoside 5'-triphosphate = DNA(n+1) + diphosphate. In terms of biological role, poorly processive, error-prone DNA polymerase involved in untargeted mutagenesis. Copies undamaged DNA at stalled replication forks, which arise in vivo from mismatched or misaligned primer ends. These misaligned primers can be extended by PolIV. Exhibits no 3'-5' exonuclease (proofreading) activity. May be involved in translesional synthesis, in conjunction with the beta clamp from PolIII. The sequence is that of DNA polymerase IV from Yersinia enterocolitica serotype O:8 / biotype 1B (strain NCTC 13174 / 8081).